We begin with the raw amino-acid sequence, 89 residues long: Small ribosomal subunit protein bS20 (89 aa).

Residues Met1–Arg12 are compositionally biased toward basic residues. Residues Met1 to Thr26 form a disordered region.

Belongs to the bacterial ribosomal protein bS20 family.

Its function is as follows. Binds directly to 16S ribosomal RNA. The chain is Small ribosomal subunit protein bS20 from Desulfovibrio desulfuricans (strain ATCC 27774 / DSM 6949 / MB).